The chain runs to 400 residues: Enoyl-[acyl-carrier-protein] reductase [NADH] 1 (400 aa).

NAD(+) is bound by residues 48 to 53 (GSSSGY), 74 to 75 (FE), 111 to 112 (DA), and 139 to 140 (LA). Y225 provides a ligand contact to substrate. Residue Y235 is the Proton donor of the active site. NAD(+)-binding positions include K244 and 273-275 (VVT).

The protein belongs to the TER reductase family. As to quaternary structure, monomer.

It catalyses the reaction a 2,3-saturated acyl-[ACP] + NAD(+) = a (2E)-enoyl-[ACP] + NADH + H(+). The protein operates within lipid metabolism; fatty acid biosynthesis. Its function is as follows. Involved in the final reduction of the elongation cycle of fatty acid synthesis (FAS II). Catalyzes the reduction of a carbon-carbon double bond in an enoyl moiety that is covalently linked to an acyl carrier protein (ACP). The polypeptide is Enoyl-[acyl-carrier-protein] reductase [NADH] 1 (Photobacterium profundum (strain SS9)).